Here is a 148-residue protein sequence, read N- to C-terminus: Snaclec stejaggregin-A subunit beta-2 (148 aa).

A signal peptide spans M1 to A23. The cysteines at positions 27 and 38 are disulfide-linked. The C-type lectin domain occupies Y34–K145. Residues N47 and N78 are each glycosylated (N-linked (GlcNAc...) asparagine). Intrachain disulfides connect C55–C144 and C121–C136.

This sequence belongs to the snaclec family. In terms of assembly, heteromultimer; disulfide-linked. Expressed by the venom gland.

The protein resides in the secreted. Functionally, interferes with one step of hemostasis (modulation of platelet aggregation, or coagulation cascade, for example). In Trimeresurus stejnegeri (Chinese green tree viper), this protein is Snaclec stejaggregin-A subunit beta-2.